Here is a 349-residue protein sequence, read N- to C-terminus: UPF0283 membrane protein Ent638_2153 (349 aa).

3 helical membrane-spanning segments follow: residues 70-90, 99-119, and 213-233; these read MVTAGLTLFGISVVGQGVQWT, WVALGGCAAGALIIGAGVGSV, and ESTLMIAVSPLALVDMAFIAW.

This sequence belongs to the UPF0283 family.

Its subcellular location is the cell inner membrane. This Enterobacter sp. (strain 638) protein is UPF0283 membrane protein Ent638_2153.